We begin with the raw amino-acid sequence, 117 residues long: Large ribosomal subunit protein bL20c (117 aa).

The protein belongs to the bacterial ribosomal protein bL20 family.

Its subcellular location is the plastid. It localises to the chloroplast. In terms of biological role, binds directly to 23S ribosomal RNA and is necessary for the in vitro assembly process of the 50S ribosomal subunit. It is not involved in the protein synthesizing functions of that subunit. In Lobularia maritima (Sweet alyssum), this protein is Large ribosomal subunit protein bL20c.